The following is a 734-amino-acid chain: DNA-binding protein RFX2 (734 aa).

The span at Met-1–Gln-23 shows a compositional bias: polar residues. The disordered stretch occupies residues Met-1–Pro-31. The segment at residues His-204–Pro-279 is a DNA-binding region (RFX-type winged-helix). Residues Asp-694–Arg-722 are disordered. The segment covering Asp-706–Arg-722 has biased composition (basic and acidic residues).

The protein belongs to the RFX family. Homodimer. Heterodimer; heterodimerizes with other rfx proteins.

The protein localises to the nucleus. Its subcellular location is the cytoplasm. Functionally, transcription factor that acts as a key regulator of ciliogenesis. Specifically regulates expression of genes required for cilium assembly and function. Recognizes and binds the X-box, a regulatory motif with DNA sequence 5'-GTNRCC(0-3N)RGYAAC-3' present on promoters. This Danio rerio (Zebrafish) protein is DNA-binding protein RFX2 (rfx2).